A 367-amino-acid chain; its full sequence is Porin Omp2a (367 aa).

An N-terminal signal peptide occupies residues 1-22 (MNIKSLLLGSAAALVAASGAQA).

The protein belongs to the alphaproteobacteria porin family. As to quaternary structure, monomer.

It localises to the cell outer membrane. Forms passive diffusion pores that allow small molecular weight hydrophilic materials across the outer membrane. The protein is Porin Omp2a (omp2a) of Brucella canis (strain ATCC 23365 / NCTC 10854 / RM-666).